We begin with the raw amino-acid sequence, 670 residues long: Solute carrier organic anion transporter family member 1A5 (670 aa).

Topologically, residues 1-20 are cytoplasmic; it reads MGETEKRVATHEVRCFSKIK. The helical transmembrane segment at 21-40 threads the bilayer; the sequence is MFLLALTWAYVSKSLSGIYM. The Extracellular segment spans residues 41–59; that stretch reads NTMLTQIERQFDIPTSIVG. Residues 60-80 form a helical membrane-spanning segment; that stretch reads FINGSFEIGNLLLIIFVSYFG. Topologically, residues 81–86 are cytoplasmic; that stretch reads TKLHRP. A helical transmembrane segment spans residues 87–111; it reads IMIGVGCVIMGLGCFLMSLPHFLMG. At 112-155 the chain is on the extracellular side; that stretch reads RYEYETTISPTSNLSSNSFLCMENRSQTLKPTQDPAECIKEMKS. Residues Asn-124 and Asn-135 are each glycosylated (N-linked (GlcNAc...) asparagine). A helical membrane pass occupies residues 156–184; sequence LMWIYVLVGNIIRGIGETPIMPLGISYIE. Over 185-203 the chain is Cytoplasmic; that stretch reads DFAKSENSPLYIGILETGK. Residues 204-224 traverse the membrane as a helical segment; that stretch reads VFGPIVGLLLGSFCASIYVDT. At 225–242 the chain is on the extracellular side; the sequence is GSVNTDDLTITPTDTRWV. The helical transmembrane segment at 243–267 threads the bilayer; that stretch reads GAWWIGFLICAGVNILSSIPFFFFP. At 268–311 the chain is on the cytoplasmic side; sequence KTLPKEGLQDDVDGTNNDKEEKHREKAKEENRGITKDFLPFMKS. A helical transmembrane segment spans residues 312-333; that stretch reads LSCNPIYMLLILTSVLQINAFI. Residues 334–353 are Extracellular-facing; that stretch reads NMFTFLPKYLEQQYGKSTAE. The chain crosses the membrane as a helical span at residues 354–377; sequence VVLLIGVYNLPPICIGYLLIGFIM. Residues 378–381 are Cytoplasmic-facing; sequence KKFK. The chain crosses the membrane as a helical span at residues 382 to 405; that stretch reads ITVKKAAYMAFCLSLFEYLLYFLH. The Extracellular segment spans residues 406-513; the sequence is FMITCDNFPV…PECANKLQYF (108 aa). A Kazal-like domain is found at 433–488; that stretch reads NKVLADCNRGCSCSTNSWDPVCGDNGLAYMSACLAGCKKSVGTGTNMVFQNCSCIR. Cystine bridges form between Cys-439–Cys-469, Cys-445–Cys-465, and Cys-454–Cys-486. 2 N-linked (GlcNAc...) asparagine glycosylation sites follow: Asn-483 and Asn-492. The chain crosses the membrane as a helical span at residues 514 to 536; sequence LIMSVIGSFIYSITAIPGYMVLL. At 537–545 the chain is on the cytoplasmic side; it reads RCIKPEEKS. A helical transmembrane segment spans residues 546-571; sequence LGIGLHAFCTRVFAGIPAPIYFGALI. Topologically, residues 572-605 are extracellular; that stretch reads DRTCLHWGTLKCGEPGACRMYNINNFRRIYLVLP. Residues 606–623 form a helical membrane-spanning segment; it reads AALRGSSYLPALFILILM. Residues 624 to 670 lie on the Cytoplasmic side of the membrane; the sequence is RKFQFPGEIDSSETELAEMKITVKKSECTDVHGSPQVENDGELKTRL.

This sequence belongs to the organo anion transporter (TC 2.A.60) family. In terms of tissue distribution, highly expressed in the kidney, moderately abundant in the retina, and even lower in the liver. Expressed (at protein level) in the small intestine. Expressed at lower levels in brain,lung, and retina.

The protein localises to the cell membrane. It is found in the basal cell membrane. It catalyses the reaction taurocholate(out) = taurocholate(in). The enzyme catalyses glycocholate(out) = glycocholate(in). The catalysed reaction is taurochenodeoxycholate(out) = taurochenodeoxycholate(in). It carries out the reaction tauroursodeoxycholate(out) = tauroursodeoxycholate(in). It catalyses the reaction 3,3',5'-triiodo-L-thyronine(out) = 3,3',5'-triiodo-L-thyronine(in). The enzyme catalyses L-thyroxine(out) = L-thyroxine(in). The catalysed reaction is taurodeoxycholate(out) = taurodeoxycholate(in). It carries out the reaction glycodeoxycholate(out) = glycodeoxycholate(in). It catalyses the reaction glycochenodeoxycholate(out) = glycochenodeoxycholate(in). The enzyme catalyses glycoursodeoxycholate(out) = glycoursodeoxycholate(in). The catalysed reaction is estrone 3-sulfate(out) = estrone 3-sulfate(in). It carries out the reaction prostaglandin E2(out) = prostaglandin E2(in). It catalyses the reaction substance P(out) = substance P(in). Functionally, na(+)-independent transporter that mediates the cellular uptake of a broad range of organic anions such as the endogenous bile salts cholate and deoxycholate, either in their unconjugated or conjugated forms (taurocholate and glycocholate), estrone 3-sulfate and prostaglandin E2, at the plasma membrane. Responsible for intestinal absorption of bile acids. Capable of thyroid hormone transport (both T3 or 3,3',5'-triiodo-L-thyronine, and T4 or L-tyroxine). Plays roles in blood-brain and -cerebrospinal fluid barrier transport of organic anions and signal mediators, and in hormone uptake by neural cells. May also play a role in the reuptake of neuropeptides such as substance P/TAC1 and vasoactive intestinal peptide/VIP released from retinal neurons. Shows a pH-sensitive substrate specificity which may be ascribed to the protonation state of the binding site and leads to a stimulation of substrate transport in an acidic microenvironment. Hydrogencarbonate/HCO3(-) acts as the probable counteranion that exchanges for organic anions. May contribute to regulate the transport of organic compounds in testis across the blood-testis-barrier. The protein is Solute carrier organic anion transporter family member 1A5 (Slco1a5) of Rattus norvegicus (Rat).